The sequence spans 667 residues: Gamma-tubulin complex component 4 (667 aa).

A disordered region spans residues 424–446; the sequence is DHKADATQPREVPSRETSPREAP.

This sequence belongs to the TUBGCP family. In terms of assembly, component of the gamma-tubulin ring complex (gTuRC) consisting of TUBGCP2, TUBGCP3, TUBGCP4, TUBGCP5 and TUBGCP6 and gamma-tubulin TUBG1 or TUBG2. TUBGCP2, TUBGCP3, TUBGCP4, TUBGCP5 and TUBGCP6 assemble in a 5:5:2:1:1 stoichiometry; each is associated with a gamma-tubulin, thereby arranging 14 gamma-tubulins in a helical manner. Gamma-tubulin at the first position is blocked by TUBGCP3 at the last position, allowing 13 protafilaments to grow into a microtubule. The gTuRC (via TUBGCP3 and TUBGCP6) interacts with ACTB and MZT1; the interactions form a luminal bridge that stabilizes the initial structure during complex assembly. The gTuRC (via TUBGCP2) interacts with MZT2A/MZT2B and CDK5RAP2 (via CM1 motif); the interactions play a role in gTuRC activation. Interacts with NINL. Interacts with ATF5; the ATF5:PCNT:polyglutamylated tubulin (PGT) tripartite unites the mother centriole and the pericentriolar material (PCM) in the centrosome.

The protein resides in the cytoplasm. The protein localises to the cytoskeleton. Its subcellular location is the microtubule organizing center. It localises to the centrosome. In terms of biological role, component of the gamma-tubulin ring complex (gTuRC) which mediates microtubule nucleation. The gTuRC regulates the minus-end nucleation of alpha-beta tubulin heterodimers that grow into microtubule protafilaments, a critical step in centrosome duplication and spindle formation. In Mus musculus (Mouse), this protein is Gamma-tubulin complex component 4 (Tubgcp4).